We begin with the raw amino-acid sequence, 124 residues long: uncharacterized protein (124 aa).

This is an uncharacterized protein from Magallana gigas (Pacific oyster).